Here is a 372-residue protein sequence, read N- to C-terminus: Protein phosphatase 1 regulatory subunit 42 (372 aa).

7 LRR repeats span residues Arg30 to Arg51, Asn52 to Ser71, Asn72 to Lys93, Arg94 to Arg115, Glu116 to Pro137, Ser146 to Glu167, and Asn168 to Leu189. The region spanning Asn203 to Trp241 is the LRRCT domain.

The protein resides in the cytoplasm. Its subcellular location is the cytoskeleton. It localises to the microtubule organizing center. The protein localises to the centrosome. Functionally, may regulate phosphatase activity of protein phosphatase 1 (PP1) complexes. The polypeptide is Protein phosphatase 1 regulatory subunit 42 (ppp1r42) (Xenopus laevis (African clawed frog)).